Reading from the N-terminus, the 1022-residue chain is Antigenic heat-stable 120 kDa protein (1022 aa).

Disordered regions lie at residues 1-41 and 355-403; these read MSKD…QTTT and GQSK…PQSQ. Over residues 19–34 the composition is skewed to basic and acidic residues; that stretch reads EYTEEQKQTLEQEQKE. 2 stretches are compositionally biased toward polar residues: residues 355 to 380 and 387 to 403; these read GQSK…QYKQ and PTNQ…PQSQ.

Its subcellular location is the cytoplasm. In Rickettsia conorii (strain ATCC VR-613 / Malish 7), this protein is Antigenic heat-stable 120 kDa protein (sca4).